The primary structure comprises 1479 residues: MHKLIIKYNKQLKMLNLRDGKTYTISEDERADITLKSLGEVIHLEQNNQGTWQANHTSINKVLVRKGDLDDITLQLYTEADYASFAYPSIQDTMTIGPNAYDDMVIQSLMNAIIIKDFQSIQESQYVRIVHDKNTDVYINYELQEQLTNKAYIGDHIYVEGIWLEVQADGLNVLSQNTVASSLIRLTQEMPHAQADDYNTYHRSPRIIHREPTDDIKIERPPQPIQKNNTVIWRSIIPPLVMIALTVVIFLVRPIGIYILMMIGMSTVTIVFGITTYFSEKKKYNKDVEKREKDYKAYLDNKSKEINKAIKAQRFSLNYHYPTVAEIKDIVETKAPRIYEKTSHHHDFLHYKLGIANVEKSFKLDYQEEEFNQRRDELFDDAKELYEFYTDVEQAPLINDLNHGPIAYIGARHLILEELEKMLIQLSTFHSYHDLEFLFVTREDEVETLKWARWLPHMTLRGQNIRGFVYNQRTRDQILTSIYSMIKERIQAVRERSRSNEQIIFTPQLVFVITDMSLIIDHVILEYVNQDLSEYGISLIFVEDVIESLPEHVDTIIDIKSRTEGELITKEKELVQLKFTPENIDNVDKEYIARRLANLIHVEHLKNAIPDSITFLEMYNVKEVDQLDVVNRWRQNETYKTMAVPLGVRGKDDILSLNLHEKAHGPHGLVAGTTGSGKSEIIQSYILSLAINFHPHEVAFLLIDYKGGGMANLFKDLVHLVGTITNLDGDEAMRALTSIKAELRKRQRLFGEHDVNHINQYHKLFKEGIATEPMPHLFIISDEFAELKSEQPDFMKELVSTARIGRSLGIHLILATQKPSGVVDDQIWSNSKFKLALKVQDRQDSNEILKTPDAADITLPGRAYLQVGNNEIYELFQSAWSGATYDIEGDKLEVEDKTIYMINDYGQLQAINKDLSGLEDEETKENQTELEAVIDHIESITTRLEIEEVKRPWLPPLPENVYQEDLVETDFRKLWSDDAKEVELTLGLKDVPEEQYQGPMVLQLKKAGHIALIGSPGYGRTTFLHNIIFDVARHHRPDQAHMYLFDFGTNGLMPVTDIPHVADYFTVDQEDKIAKAIRIFNDEIDRRKKILSQYRVTSISEYRKLTGETIPHVFILIDNFDAVKDSPFQEVFENMMIKMTREGLALDMQVTLTASRANAMKTPMYINMKTRIAMFLYDKSEVSNVVGQQKFAVKDVVGRALLSSDDNVSFHIGQPFKHDETKSYNDQINDEVSAMTEFYKGETPNDIPMMPDEIKYEDYRESLNLPDIVANGALPIGLDYEGVTLQKIKLTEPAMISSENPREIAHIAEIMMKEIDILNEKYAICIADSSGEFKAYRHQVANFAEEREDIKAIHQLMIEDLKQREMDGPFEKDSLYIINDFKTFIDCTYIPEDDVKKLITKGPELGLNILFVGIHKELIDAYDKQIDVARKMINQFSIGIRISDQQFFKFRFIQREPVIKENEAYMVANQAYQKIRWFK.

Residues 1–189 form a required for substrate secretion, protein missing this segment is unstable region; sequence MHKLIIKYNK…ASSLIRLTQE (189 aa). The Cytoplasmic segment spans residues 1 to 229; it reads MHKLIIKYNK…RPPQPIQKNN (229 aa). A helical membrane pass occupies residues 230-252; that stretch reads TVIWRSIIPPLVMIALTVVIFLV. Residues 253–256 are Extracellular-facing; sequence RPIG. A helical transmembrane segment spans residues 257–279; the sequence is IYILMMIGMSTVTIVFGITTYFS. Topologically, residues 280–1479 are cytoplasmic; it reads EKKKYNKDVE…QAYQKIRWFK (1200 aa). 2 consecutive FtsK domains span residues 652 to 846 and 997 to 1183; these read DDIL…QDSN and QGPM…SEVS. Residues 672 to 679 and 1014 to 1021 each bind ATP; these read GTTGSGKS and GSPGYGRT. The required for substrate secretion, truncated protein is stable stretch occupies residues 1249–1479; sequence MMPDEIKYED…QAYQKIRWFK (231 aa).

This sequence belongs to the EssC family. Homooligomer. Interacts with EsaE.

The protein localises to the cell membrane. In terms of biological role, component of the type VII secretion system (Ess). Required for the secretion of substrates including EsxA and EsxB. However, unable to support secretion of the substrate protein EsxC. In Staphylococcus aureus (strain NCTC 8325 / PS 47), this protein is Type VII secretion system protein EssC.